A 156-amino-acid polypeptide reads, in one-letter code: ATP synthase subunit b (156 aa).

Residues 7 to 29 (LFGQTVAFILFVWFCMKFVWPPL) form a helical membrane-spanning segment.

This sequence belongs to the ATPase B chain family. F-type ATPases have 2 components, F(1) - the catalytic core - and F(0) - the membrane proton channel. F(1) has five subunits: alpha(3), beta(3), gamma(1), delta(1), epsilon(1). F(0) has three main subunits: a(1), b(2) and c(10-14). The alpha and beta chains form an alternating ring which encloses part of the gamma chain. F(1) is attached to F(0) by a central stalk formed by the gamma and epsilon chains, while a peripheral stalk is formed by the delta and b chains.

It localises to the cell inner membrane. F(1)F(0) ATP synthase produces ATP from ADP in the presence of a proton or sodium gradient. F-type ATPases consist of two structural domains, F(1) containing the extramembraneous catalytic core and F(0) containing the membrane proton channel, linked together by a central stalk and a peripheral stalk. During catalysis, ATP synthesis in the catalytic domain of F(1) is coupled via a rotary mechanism of the central stalk subunits to proton translocation. Functionally, component of the F(0) channel, it forms part of the peripheral stalk, linking F(1) to F(0). In Shewanella frigidimarina (strain NCIMB 400), this protein is ATP synthase subunit b.